Consider the following 396-residue polypeptide: Mitogen-activated protein kinase mpkC (396 aa).

Residues 20 to 299 (YSDLQPVGLG…AAKALEHPYL (280 aa)) enclose the Protein kinase domain. ATP-binding positions include 26-34 (VGLGAFGLV) and K49. The active-site Proton acceptor is D141. The residue at position 171 (T171) is a Phosphothreonine. Residues 171-173 (TGY) carry the TXY motif. The residue at position 173 (Y173) is a Phosphotyrosine.

The protein belongs to the protein kinase superfamily. Ser/Thr protein kinase family. MAP kinase subfamily. HOG1 sub-subfamily. The cofactor is Mg(2+). In terms of processing, dually phosphorylated on Thr-171 and Tyr-173, which activates the enzyme.

It catalyses the reaction L-seryl-[protein] + ATP = O-phospho-L-seryl-[protein] + ADP + H(+). It carries out the reaction L-threonyl-[protein] + ATP = O-phospho-L-threonyl-[protein] + ADP + H(+). With respect to regulation, activated by tyrosine and threonine phosphorylation. Its function is as follows. Mitogen-activated protein kinase required for growth on media where sorbitol or mannitol is the sole carbon source. This is Mitogen-activated protein kinase mpkC (mpkC) from Aspergillus niger (strain ATCC MYA-4892 / CBS 513.88 / FGSC A1513).